The chain runs to 497 residues: Cytosol aminopeptidase (497 aa).

The Mn(2+) site is built by Lys-267 and Asp-272. Residue Lys-279 is part of the active site. Mn(2+) is bound by residues Asp-290, Asp-349, and Glu-351. Arg-353 is an active-site residue.

It belongs to the peptidase M17 family. The cofactor is Mn(2+).

The protein resides in the cytoplasm. It carries out the reaction Release of an N-terminal amino acid, Xaa-|-Yaa-, in which Xaa is preferably Leu, but may be other amino acids including Pro although not Arg or Lys, and Yaa may be Pro. Amino acid amides and methyl esters are also readily hydrolyzed, but rates on arylamides are exceedingly low.. The enzyme catalyses Release of an N-terminal amino acid, preferentially leucine, but not glutamic or aspartic acids.. Presumably involved in the processing and regular turnover of intracellular proteins. Catalyzes the removal of unsubstituted N-terminal amino acids from various peptides. The polypeptide is Cytosol aminopeptidase (pepA) (Pseudomonas putida (Arthrobacter siderocapsulatus)).